The sequence spans 166 residues: 16S rRNA aminocarboxypropyltransferase (166 aa).

Positions 17, 62, 84, 99, and 103 each coordinate S-adenosyl-L-methionine.

Belongs to the TDD superfamily. TSR3 family.

The protein resides in the cytoplasm. The enzyme catalyses an N(1)-methylpseudouridine in rRNA + S-adenosyl-L-methionine = N(1)-methyl-N(3)-[(3S)-3-amino-3-carboxypropyl]pseudouridine in rRNA + S-methyl-5'-thioadenosine + H(+). Aminocarboxypropyltransferase that catalyzes the aminocarboxypropyl transfer on pseudouridine corresponding to position 914 in M.jannaschii 16S rRNA. It constitutes the last step in biosynthesis of the hypermodified N1-methyl-N3-(3-amino-3-carboxypropyl) pseudouridine (m1acp3-Psi). The sequence is that of 16S rRNA aminocarboxypropyltransferase from Saccharolobus islandicus (strain M.16.27) (Sulfolobus islandicus).